Here is an 877-residue protein sequence, read N- to C-terminus: Polycomb protein Scm (877 aa).

Residues Met-1–Pro-57 are disordered. Positions Ser-7 to Thr-50 are enriched in low complexity. An FCS-type zinc finger spans residues Arg-54–Ala-93. Zn(2+)-binding residues include Cys-63, Cys-66, Cys-87, and Cys-91. MBT repeat units lie at residues Phe-175 to Pro-273 and Ser-281 to Pro-382. 3 disordered regions span residues Asn-535–Val-621, Thr-652–Ala-692, and Ala-713–Pro-735. Thr-546 bears the Phosphothreonine mark. Phosphoserine occurs at positions 549 and 550. Polar residues predominate over residues Gln-560–Ser-569. At Ser-585 the chain carries Phosphoserine. The span at Ala-598–Lys-620 shows a compositional bias: low complexity. Residues Ser-724 to Pro-735 show a composition bias toward low complexity. In terms of domain architecture, SAM spans Trp-806 to Ala-876.

The protein belongs to the SCM family. Scm associates with the PRC1 core complex containing PSC, PC, PH and Sce/RING1. Forms homotypic and heterotypic interactions. Interacts with the SAM domain of ph-p via its SAM domain in vitro. Interacts with corto in vitro.

The protein localises to the nucleus. Functionally, polycomb group (PcG) protein. PcG proteins act by forming multiprotein complexes, which are required to maintain the transcriptionally repressive state of homeotic genes throughout development. PcG proteins are not required to initiate repression, but to maintain it during later stages of development. They probably act via the methylation of histones, rendering chromatin heritably changed in its expressibility. This Drosophila melanogaster (Fruit fly) protein is Polycomb protein Scm.